Reading from the N-terminus, the 272-residue chain is Phosphate import ATP-binding protein PstB (272 aa).

Residues 20-267 (VKKEVVYETN…PADQRTADYI (248 aa)) enclose the ABC transporter domain. 58–65 (GPSGCGKS) contacts ATP.

The protein belongs to the ABC transporter superfamily. Phosphate importer (TC 3.A.1.7) family. The complex is composed of two ATP-binding proteins (PstB), two transmembrane proteins (PstC and PstA) and a solute-binding protein (PstS).

The protein resides in the cell membrane. The enzyme catalyses phosphate(out) + ATP + H2O = ADP + 2 phosphate(in) + H(+). Its function is as follows. Part of the ABC transporter complex PstSACB involved in phosphate import. Responsible for energy coupling to the transport system. This is Phosphate import ATP-binding protein PstB from Geobacillus kaustophilus (strain HTA426).